We begin with the raw amino-acid sequence, 783 residues long: Outer membrane usher protein FanD (783 aa).

Residues 1-23 (MNRKKHQILKILLLCLISSKSSA) form the signal peptide. A disulfide bridge links Cys763 with Cys782.

Belongs to the fimbrial export usher family.

The protein resides in the cell outer membrane. Its function is as follows. Involved in the export and assembly of K99 fimbrial subunits across the outer membrane. The chain is Outer membrane usher protein FanD (fanD) from Escherichia coli.